We begin with the raw amino-acid sequence, 540 residues long: Chaperonin GroEL 3 (540 aa).

Residues 30-33, K51, 87-91, G415, 479-481, and D495 each bind ATP; these read TLGP, DGTTT, and NAA.

It belongs to the chaperonin (HSP60) family. In terms of assembly, forms a cylinder of 14 subunits composed of two heptameric rings stacked back-to-back. Interacts with the co-chaperonin GroES.

It is found in the cytoplasm. It carries out the reaction ATP + H2O + a folded polypeptide = ADP + phosphate + an unfolded polypeptide.. Functionally, together with its co-chaperonin GroES, plays an essential role in assisting protein folding. The GroEL-GroES system forms a nano-cage that allows encapsulation of the non-native substrate proteins and provides a physical environment optimized to promote and accelerate protein folding. This is Chaperonin GroEL 3 from Burkholderia ambifaria (strain ATCC BAA-244 / DSM 16087 / CCUG 44356 / LMG 19182 / AMMD) (Burkholderia cepacia (strain AMMD)).